The following is a 201-amino-acid chain: Small ribosomal subunit protein uS5 (201 aa).

The interval 1–28 (MARGEQQRGEGGQRRDRRDRNAPEERVD) is disordered. The S5 DRBM domain maps to 31–94 (IVEKLVHINR…EEAKKTMIRV (64 aa)). Positions 173 to 201 (QIAAKRGKKVGDILGRRADGASAPEAIEG) are disordered. The segment covering 181–191 (KVGDILGRRAD) has biased composition (basic and acidic residues).

The protein belongs to the universal ribosomal protein uS5 family. Part of the 30S ribosomal subunit. Contacts proteins S4 and S8.

Its function is as follows. With S4 and S12 plays an important role in translational accuracy. In terms of biological role, located at the back of the 30S subunit body where it stabilizes the conformation of the head with respect to the body. This Caulobacter vibrioides (strain ATCC 19089 / CIP 103742 / CB 15) (Caulobacter crescentus) protein is Small ribosomal subunit protein uS5.